The primary structure comprises 151 residues: MQDSSIKLGIVVAEFNYDITHLMLDRAISHAKFLNAEVRAVFKVPGTFEIPLAVKQLLSRDDIDCVVTLGAVIKGETKHDEVIANQVARLVSDLSLEFNKPVSLGIIGPGATHEQAMERIEEYSTRAVESAVKMARRMRSMMEGSSSVNIE.

5-amino-6-(D-ribitylamino)uracil is bound by residues Phe-15, 47–49 (TFE), and 71–73 (AVI). 76–77 (ET) is a binding site for (2S)-2-hydroxy-3-oxobutyl phosphate. The active-site Proton donor is His-79. Residue Leu-104 participates in 5-amino-6-(D-ribitylamino)uracil binding. Arg-119 serves as a coordination point for (2S)-2-hydroxy-3-oxobutyl phosphate.

Belongs to the DMRL synthase family.

The enzyme catalyses (2S)-2-hydroxy-3-oxobutyl phosphate + 5-amino-6-(D-ribitylamino)uracil = 6,7-dimethyl-8-(1-D-ribityl)lumazine + phosphate + 2 H2O + H(+). It functions in the pathway cofactor biosynthesis; riboflavin biosynthesis; riboflavin from 2-hydroxy-3-oxobutyl phosphate and 5-amino-6-(D-ribitylamino)uracil: step 1/2. Its function is as follows. Catalyzes the formation of 6,7-dimethyl-8-ribityllumazine by condensation of 5-amino-6-(D-ribitylamino)uracil with 3,4-dihydroxy-2-butanone 4-phosphate. This is the penultimate step in the biosynthesis of riboflavin. In Metallosphaera sedula (strain ATCC 51363 / DSM 5348 / JCM 9185 / NBRC 15509 / TH2), this protein is 6,7-dimethyl-8-ribityllumazine synthase.